A 531-amino-acid chain; its full sequence is Nuclear RNA export factor 3 (531 aa).

Disordered stretches follow at residues 33–59 and 83–106; these read RSEP…HGAH and QDQT…GNMP. A compositionally biased stretch (polar residues) spans 41–50; that stretch reads MHSSSHQQQD. Over residues 83 to 102 the composition is skewed to basic and acidic residues; the sequence is QDQTHVNMEREQKPPERRME. The region spanning 113–192 is the RRM domain; it reads WFKITVPFGI…IFVNPAGIPH (80 aa). An NTF2 domain is found at 344-494; sequence LVLQFLQQYY…LCIVNDKLFV (151 aa).

This sequence belongs to the NXF family. In terms of assembly, interacts with NXT1, NXT2, E1B-AP5 and CRM1 nuclear export factor. Expressed at high level in testis and at low level in a small number of tissues.

Its subcellular location is the nucleus. The protein resides in the cytoplasm. In terms of biological role, may function as a tissue-specific nuclear mRNA export factor. The chain is Nuclear RNA export factor 3 (NXF3) from Homo sapiens (Human).